A 638-amino-acid polypeptide reads, in one-letter code: FSPSTTRLESRVRELEDMLDLERDARVRAERHAADMSFQVDALSERLDEAGGNSSQTHELLKRREMEIGKLRKDLENANASLEMAETSMRRRHQTALNELAAEVENLQKQKGKAEKDKNSLIMEVGNVLGQLDGALKAKQSAESKLEGLDAQLNRLKGLTDDLQRQLNDLNAAKARLTSENFELLHANQEYEAQVLNLSKSRSSLESAVDDLKRSLDDEAKSRFNLQAQLTSLQMDYDNLQAKYEEESEEASNLRNQVSKFNADLAAMKSKFERELMSKTEEYEELKRKLTLRITELEDTAERERARASNLEKIKAKLTIEIKDLQNEVDSLSAENAELARRAKAAENLANDLQRRVDELTIEINNLHSQNSQLEAENMRLKSQVNDLVDKNAALDRENRQLSDQVKDLKSTLRDANRRLTDLEALRSQLEAERDNLASALHDAEEALREVDQKYQNAQAALNHLKSEMEQRLREKDEELETLRKSTTRTIEELTVTITEMEVKYKSELSRLKKRYESNIAELELQLDTANKANANLMKENKTLAQRVKDLEAFLEEERRLREAAESNLQASERKRIQLSSEVEELRGALEAADRARKHAENEMNEAQTRVSELTMQVNTLTNDKRRLEGDISVMQAD.

Positions 1-638 form a coiled coil; sequence FSPSTTRLES…EGDISVMQAD (638 aa).

It belongs to the paramyosin family. In terms of assembly, homodimer.

The protein resides in the cytoplasm. It localises to the myofibril. Functionally, paramyosin is a major structural component of many thick filaments isolated from invertebrate muscles. The polypeptide is Paramyosin (Opisthorchis felineus).